Here is a 310-residue protein sequence, read N- to C-terminus: Protein-L-isoaspartate O-methyltransferase (310 aa).

Disordered stretches follow at residues 1 to 42 (MSGE…AADK) and 64 to 90 (SAAA…APSV). Residues 14–32 (EDLKRAPRKSEGRAGERHA) are compositionally biased toward basic and acidic residues. Over residues 64–81 (SAAAKPATAPKPTALKPA) the composition is skewed to low complexity. Ser-157 is a catalytic residue.

It belongs to the methyltransferase superfamily. L-isoaspartyl/D-aspartyl protein methyltransferase family.

Its subcellular location is the cytoplasm. It catalyses the reaction [protein]-L-isoaspartate + S-adenosyl-L-methionine = [protein]-L-isoaspartate alpha-methyl ester + S-adenosyl-L-homocysteine. Catalyzes the methyl esterification of L-isoaspartyl residues in peptides and proteins that result from spontaneous decomposition of normal L-aspartyl and L-asparaginyl residues. It plays a role in the repair and/or degradation of damaged proteins. This Burkholderia lata (strain ATCC 17760 / DSM 23089 / LMG 22485 / NCIMB 9086 / R18194 / 383) protein is Protein-L-isoaspartate O-methyltransferase.